We begin with the raw amino-acid sequence, 732 residues long: Ribosomal RNA large subunit methyltransferase K/L (732 aa).

The THUMP domain occupies 50 to 162; it reads MAYRICLWSR…RGRLLLGLDL (113 aa). A disordered region spans residues 396-424; sequence TERETSSEGDEPQGASGATSRPGPRNDGA.

The protein belongs to the methyltransferase superfamily. RlmKL family.

It localises to the cytoplasm. The catalysed reaction is guanosine(2445) in 23S rRNA + S-adenosyl-L-methionine = N(2)-methylguanosine(2445) in 23S rRNA + S-adenosyl-L-homocysteine + H(+). It catalyses the reaction guanosine(2069) in 23S rRNA + S-adenosyl-L-methionine = N(2)-methylguanosine(2069) in 23S rRNA + S-adenosyl-L-homocysteine + H(+). In terms of biological role, specifically methylates the guanine in position 2445 (m2G2445) and the guanine in position 2069 (m7G2069) of 23S rRNA. In Chromohalobacter salexigens (strain ATCC BAA-138 / DSM 3043 / CIP 106854 / NCIMB 13768 / 1H11), this protein is Ribosomal RNA large subunit methyltransferase K/L.